We begin with the raw amino-acid sequence, 526 residues long: Ubiquitin carboxyl-terminal hydrolase 17-like protein A (526 aa).

Residues 1–21 are disordered; the sequence is MVVALSFPEADPALSSPDAPE. Positions 51 to 348 constitute a USP domain; it reads CGLQNTGNSC…NAYVLFYVQQ (298 aa). The active-site Nucleophile is the Cys60. The active-site Proton acceptor is His307. Positions 374 to 385 are enriched in basic residues; the sequence is KKSRRKKHKKKS. Disordered regions lie at residues 374-394 and 465-494; these read KKSR…LGEP and RSTA…SQGP. A compositionally biased stretch (basic and acidic residues) spans 473-486; sequence DSPDKENQPLHNAD.

Belongs to the peptidase C19 family. In terms of processing, polyubiquitinated; ubiquitination leads to its subsequent degradation. As to expression, expressed in hematopoietic progenitor cell lines Ba/F3 and FDCP1. Not detected in brain, lung, liver, kidney, thymus, spleen and bone marrow.

The enzyme catalyses Thiol-dependent hydrolysis of ester, thioester, amide, peptide and isopeptide bonds formed by the C-terminal Gly of ubiquitin (a 76-residue protein attached to proteins as an intracellular targeting signal).. Functionally, deubiquitinating enzyme that removes conjugated ubiquitin from specific proteins to regulate different cellular processes. Has deubiquitinating enzyme activity for DNAH5, suggesting a role in the regulation of DNAH5 degradation by the ubiquitin-proteasome pathway. Has growth-suppressing activity; induces arrest in G1 phase upon controlled expression. In Mus musculus (Mouse), this protein is Ubiquitin carboxyl-terminal hydrolase 17-like protein A (Usp17la).